The primary structure comprises 465 residues: Opioid growth factor receptor-like protein 1 (465 aa).

Disordered stretches follow at residues 1 to 89 and 309 to 465; these read MGNL…GNAK and ENFI…TSSG. Composition is skewed to basic and acidic residues over residues 48 to 59, 316 to 325, 363 to 396, and 426 to 440; these read REQPEQPPERAG, PKKEQPERSK, TVEEKKVASREPGEETDKPSPEASSEDTKPRNSE, and SEKDGEGENQSKDSE. The segment covering 442–465 has biased composition (polar residues); that stretch reads PENTSCHAEVVSQQNVTNPQTSSG.

Belongs to the opioid growth factor receptor family.

The chain is Opioid growth factor receptor-like protein 1 (Ogfrl1) from Rattus norvegicus (Rat).